We begin with the raw amino-acid sequence, 187 residues long: Oligoribonuclease (187 aa).

The 164-residue stretch at 7 to 170 (LCWLDMEMTG…DDILESIEEM (164 aa)) folds into the Exonuclease domain. Residue Tyr128 is part of the active site.

This sequence belongs to the oligoribonuclease family.

It localises to the cytoplasm. Functionally, 3'-to-5' exoribonuclease specific for small oligoribonucleotides. This Neisseria meningitidis serogroup A / serotype 4A (strain DSM 15465 / Z2491) protein is Oligoribonuclease.